A 274-amino-acid polypeptide reads, in one-letter code: Formamidopyrimidine-DNA glycosylase (274 aa).

Pro2 (schiff-base intermediate with DNA) is an active-site residue. Glu3 serves as the catalytic Proton donor. Lys60 acts as the Proton donor; for beta-elimination activity in catalysis. DNA contacts are provided by His93 and Arg112. An FPG-type zinc finger spans residues 240 to 274 (FVYGRKGEPCKRCGTPIEKTVVAGRGTHYCPRCQR). Residue Arg264 is the Proton donor; for delta-elimination activity of the active site.

This sequence belongs to the FPG family. Monomer. Requires Zn(2+) as cofactor.

It catalyses the reaction Hydrolysis of DNA containing ring-opened 7-methylguanine residues, releasing 2,6-diamino-4-hydroxy-5-(N-methyl)formamidopyrimidine.. The catalysed reaction is 2'-deoxyribonucleotide-(2'-deoxyribose 5'-phosphate)-2'-deoxyribonucleotide-DNA = a 3'-end 2'-deoxyribonucleotide-(2,3-dehydro-2,3-deoxyribose 5'-phosphate)-DNA + a 5'-end 5'-phospho-2'-deoxyribonucleoside-DNA + H(+). Functionally, involved in base excision repair of DNA damaged by oxidation or by mutagenic agents. Acts as a DNA glycosylase that recognizes and removes damaged bases. Has a preference for oxidized purines, such as 7,8-dihydro-8-oxoguanine (8-oxoG). Has AP (apurinic/apyrimidinic) lyase activity and introduces nicks in the DNA strand. Cleaves the DNA backbone by beta-delta elimination to generate a single-strand break at the site of the removed base with both 3'- and 5'-phosphates. The chain is Formamidopyrimidine-DNA glycosylase from Geobacillus kaustophilus (strain HTA426).